The following is a 389-amino-acid chain: S-adenosylmethionine synthase (389 aa).

His15 contributes to the ATP binding site. Mg(2+) is bound at residue Asp17. Position 43 (Glu43) interacts with K(+). The L-methionine site is built by Glu56 and Gln99. Residues 99–109 (QSPDIAQGVNE) form a flexible loop region. ATP-binding positions include 166–168 (DAK), 234–235 (RF), Asp243, 249–250 (RK), Ala266, and Lys270. Residue Asp243 coordinates L-methionine. Lys274 is an L-methionine binding site.

This sequence belongs to the AdoMet synthase family. Homotetramer; dimer of dimers. The cofactor is Mg(2+). K(+) is required as a cofactor.

It localises to the cytoplasm. It carries out the reaction L-methionine + ATP + H2O = S-adenosyl-L-methionine + phosphate + diphosphate. It functions in the pathway amino-acid biosynthesis; S-adenosyl-L-methionine biosynthesis; S-adenosyl-L-methionine from L-methionine: step 1/1. Catalyzes the formation of S-adenosylmethionine (AdoMet) from methionine and ATP. The overall synthetic reaction is composed of two sequential steps, AdoMet formation and the subsequent tripolyphosphate hydrolysis which occurs prior to release of AdoMet from the enzyme. The polypeptide is S-adenosylmethionine synthase (Neisseria gonorrhoeae (strain ATCC 700825 / FA 1090)).